The following is a 149-amino-acid chain: Extracellular protease inhibitor 1 (149 aa).

Positions 1–16 (MKSALLFTLVVAAVHA) are cleaved as a signal peptide. 2 Kazal-like domains span residues 29 to 86 (ESNE…SSTG) and 88 to 141 (QPPS…ACVG). Intrachain disulfides connect C35-C65 and C39-C58. N67 carries N-linked (GlcNAc...) asparagine glycosylation. Cystine bridges form between C94–C124, C98–C117, and C106–C139.

In terms of assembly, interacts with host subtilisin-like protease P69B.

It localises to the secreted. In terms of biological role, secreted effector that interacts with and inhibits the pathogenesis-related P69B subtilisin-like serine protease of host tomato. Inhibition of host proteases by a pathogen extracellular protease inhibitor forms a specific type of defense-counterdefense mechanism between plants and microbial pathogens. The polypeptide is Extracellular protease inhibitor 1 (Phytophthora infestans (Potato late blight agent)).